Reading from the N-terminus, the 317-residue chain is Mitochondrial thiamine pyrophosphate carrier 1 (317 aa).

6 helical membrane passes run 21 to 41 (AVSG…ARSV), 86 to 106 (VPAS…YAWL), 122 to 142 (LAVG…LDLL), 176 to 196 (GGAW…GIYE), 207 to 227 (LPWL…AAVF), and 281 to 300 (GLTM…LWVY). Solcar repeat units follow at residues 22-109 (VSGL…LNTA), 116-201 (PPQA…CTIA), and 206-306 (GLPW…CLRL).

It belongs to the mitochondrial carrier (TC 2.A.29) family.

The protein resides in the mitochondrion inner membrane. In terms of biological role, mitochondrial transporter that mediates uptake of thiamine pyrophosphate (ThPP) into mitochondria. The polypeptide is Mitochondrial thiamine pyrophosphate carrier 1 (TPC1) (Eremothecium gossypii (strain ATCC 10895 / CBS 109.51 / FGSC 9923 / NRRL Y-1056) (Yeast)).